Here is a 149-residue protein sequence, read N- to C-terminus: MKLDLSTFLKRDELPFRSLEEAKEYVAKYTLNFINIELEGLPKEEWENTLKTWVKIFAFARELLKLPQERRKEVYRKYNFDSMMEGIMEDAVKVLYGFYSLGILKPEDKPHKALEKATELIENEEELLKREGIKRENLKFIKEFLKKFN.

The stretch at 111–140 forms a coiled coil; sequence HKALEKATELIENEEELLKREGIKRENLKF.

This is an uncharacterized protein from Aquifex aeolicus (strain VF5).